The following is a 207-amino-acid chain: Probable GTP-binding protein EngB (207 aa).

In terms of domain architecture, EngB-type G spans 24 to 199 (GGYEVAFAGR…RAIVGAWLGL (176 aa)). GTP contacts are provided by residues 32-39 (GRSNAGKS), 59-63 (GRTQQ), 77-80 (DLPG), 144-147 (TKAD), and 178-180 (YSG). Mg(2+) contacts are provided by serine 39 and threonine 61.

The protein belongs to the TRAFAC class TrmE-Era-EngA-EngB-Septin-like GTPase superfamily. EngB GTPase family. Mg(2+) is required as a cofactor.

Functionally, necessary for normal cell division and for the maintenance of normal septation. This chain is Probable GTP-binding protein EngB, found in Xanthomonas euvesicatoria pv. vesicatoria (strain 85-10) (Xanthomonas campestris pv. vesicatoria).